We begin with the raw amino-acid sequence, 169 residues long: Ribosome maturation factor RimM (169 aa).

The PRC barrel domain occupies 94–166; the sequence is EEGFYDHELE…TATITPPDGL (73 aa).

It belongs to the RimM family. Binds ribosomal protein uS19.

The protein resides in the cytoplasm. In terms of biological role, an accessory protein needed during the final step in the assembly of 30S ribosomal subunit, possibly for assembly of the head region. Essential for efficient processing of 16S rRNA. May be needed both before and after RbfA during the maturation of 16S rRNA. It has affinity for free ribosomal 30S subunits but not for 70S ribosomes. The polypeptide is Ribosome maturation factor RimM (Corynebacterium efficiens (strain DSM 44549 / YS-314 / AJ 12310 / JCM 11189 / NBRC 100395)).